A 381-amino-acid polypeptide reads, in one-letter code: Cytochrome b (381 aa).

Helical transmembrane passes span 38–58, 82–103, 118–138, and 183–203; these read FGSL…FLAM, WLLR…YFHI, WMTG…GYVL, and FFTF…IHLL. Residues His-88 and His-102 each coordinate heme b. Residues His-187 and His-201 each coordinate heme b. Residue His-206 coordinates a ubiquinone. Transmembrane regions (helical) follow at residues 231–251, 293–313, 325–345, and 352–372; these read IKDT…SLTS, LGGV…PFTF, VAQP…WIGA, and YNFL…FTPI.

Belongs to the cytochrome b family. The main subunits of complex b-c1 are: cytochrome b, cytochrome c1 and the Rieske protein. Heme b is required as a cofactor.

It localises to the mitochondrion inner membrane. Component of the ubiquinol-cytochrome c reductase complex (complex III or cytochrome b-c1 complex) that is part of the mitochondrial respiratory chain. The b-c1 complex mediates electron transfer from ubiquinol to cytochrome c. Contributes to the generation of a proton gradient across the mitochondrial membrane that is then used for ATP synthesis. The sequence is that of Cytochrome b (MT-CYB) from Artemia franciscana (Brine shrimp).